Reading from the N-terminus, the 298-residue chain is Acetaldehyde dehydrogenase (298 aa).

NAD(+) is bound at residue 6-9 (SGNI). C121 (acyl-thioester intermediate) is an active-site residue. Residues 152–160 (SAGPGTRAN) and N271 each bind NAD(+).

This sequence belongs to the acetaldehyde dehydrogenase family.

The enzyme catalyses acetaldehyde + NAD(+) + CoA = acetyl-CoA + NADH + H(+). In Mycobacterium avium (strain 104), this protein is Acetaldehyde dehydrogenase.